The sequence spans 507 residues: ATP synthase subunit alpha, chloroplastic (507 aa).

Glycine 170–threonine 177 lines the ATP pocket.

This sequence belongs to the ATPase alpha/beta chains family. In terms of assembly, F-type ATPases have 2 components, CF(1) - the catalytic core - and CF(0) - the membrane proton channel. CF(1) has five subunits: alpha(3), beta(3), gamma(1), delta(1), epsilon(1). CF(0) has four main subunits: a, b, b' and c.

It is found in the plastid. It localises to the chloroplast thylakoid membrane. The enzyme catalyses ATP + H2O + 4 H(+)(in) = ADP + phosphate + 5 H(+)(out). Functionally, produces ATP from ADP in the presence of a proton gradient across the membrane. The alpha chain is a regulatory subunit. In Nandina domestica (Heavenly bamboo), this protein is ATP synthase subunit alpha, chloroplastic.